A 92-amino-acid chain; its full sequence is Ferredoxin-like protein in nif region (92 aa).

4Fe-4S ferredoxin-type domains lie at 2–28 (ALKI…SLAG) and 29–65 (PHFE…LADG). Positions 9, 12, 15, 19, 38, 41, 50, and 54 each coordinate [4Fe-4S] cluster.

The cofactor is [4Fe-4S] cluster.

In terms of biological role, ferredoxins are iron-sulfur proteins that transfer electrons in a wide variety of metabolic reactions. The protein is Ferredoxin-like protein in nif region of Azotobacter vinelandii.